Here is a 118-residue protein sequence, read N- to C-terminus: Elicitin (118 aa).

The signal sequence occupies residues 1–20 (MNFRALFAATVAALVGSTSA). Disulfide bonds link cysteine 23–cysteine 91, cysteine 47–cysteine 76, and cysteine 71–cysteine 115.

It belongs to the elicitin family.

Its subcellular location is the secreted. In terms of biological role, induces local and distal defense responses (incompatible hypersensitive reaction) in plants from the solanaceae and cruciferae families. Elicits leaf necrosis and causes the accumulation of pathogenesis-related proteins. Might interact with the lipidic molecules of the plasma membrane. The sequence is that of Elicitin (PARA1) from Phytophthora nicotianae (Potato buckeye rot agent).